Reading from the N-terminus, the 5801-residue chain is uncharacterized protein (5801 aa).

Disordered regions lie at residues 1114–1136 (DDDN…NKKI), 1827–1846 (KDRS…SINN), 2040–2109 (NNGE…SPLF), 3351–3392 (EKSN…NNSG), 5134–5168 (DNNN…SESD), 5478–5573 (ISDP…EDII), and 5600–5638 (HDKD…ETPG). Composition is skewed to low complexity over residues 1118–1134 (NNSN…NNNK), 1831–1846 (SSSS…SINN), 2048–2096 (QQLQ…QQQQ), 3353–3392 (SNNN…NNSG), and 5135–5153 (NNNN…NNNN). A compositionally biased stretch (acidic residues) spans 5496 to 5573 (DNEEEEEDDD…EDEDEDEDII (78 aa)). Residues 5617 to 5629 (QQPEKPQQPEKPQ) show a composition bias toward basic and acidic residues.

This is an uncharacterized protein from Dictyostelium discoideum (Social amoeba).